The sequence spans 629 residues: Long-chain-fatty-acid--AMP ligase FadD32 (629 aa).

ATP contacts are provided by residues 186–191, Ser-341, Ala-345, Asp-468, and Arg-482; that span reads TSGSTR.

This sequence belongs to the ATP-dependent AMP-binding enzyme family. Monomer.

The enzyme catalyses a long-chain fatty acid + holo-[ACP] + ATP = a long-chain fatty acyl-[ACP] + AMP + diphosphate. The catalysed reaction is dodecanoate + ATP + H(+) = dodecanoyl-AMP + diphosphate. It carries out the reaction tetradecanoate + ATP + H(+) = tetradecanoyl-AMP + diphosphate. Its pathway is lipid metabolism; mycolic acid biosynthesis. Its activity is regulated as follows. The acyl-AMP ligase activity is inhibited by the alkylphosphate esters of AMP, adenosine 50-dodecylphosphate (AMPC12) and eicosyl-AMP (AMPC20). Involved in the biosynthesis of mycolic acids. Catalyzes the activation of long-chain fatty acids as acyl-adenylates (acyl-AMP), which are then transferred to the phosphopantetheine arm of the polyketide synthase Pks13 for further chain extension. Can use dodecanoate (C12) and tetradecanoate (C14). This is Long-chain-fatty-acid--AMP ligase FadD32 (fadD32) from Mycobacterium marinum (strain ATCC BAA-535 / M).